The primary structure comprises 376 residues: 26S proteasome non-ATPase regulatory subunit 13 (376 aa).

The PCI domain maps to 171-338 (SYYKDALRFL…KRVHMTWVQP (168 aa)). Lysine 298 carries the N6-acetyllysine modification.

It belongs to the proteasome subunit S11 family. Component of the 19S proteasome regulatory particle complex. The 26S proteasome consists of a 20S core particle (CP) and two 19S regulatory subunits (RP). The regulatory particle is made of a lid composed of 9 subunits including PSMD13, a base containing 6 ATPases and few additional components.

In terms of biological role, component of the 26S proteasome, a multiprotein complex involved in the ATP-dependent degradation of ubiquitinated proteins. This complex plays a key role in the maintenance of protein homeostasis by removing misfolded or damaged proteins, which could impair cellular functions, and by removing proteins whose functions are no longer required. Therefore, the proteasome participates in numerous cellular processes, including cell cycle progression, apoptosis, or DNA damage repair. This is 26S proteasome non-ATPase regulatory subunit 13 from Rattus norvegicus (Rat).